The primary structure comprises 285 residues: Acetyl-coenzyme A carboxylase carboxyl transferase subunit beta (285 aa).

The CoA carboxyltransferase N-terminal domain maps to 29 to 285; sequence IMTKCPNCKK…ILKIHQEVSN (257 aa). Residues cysteine 33, cysteine 36, cysteine 52, and cysteine 55 each contribute to the Zn(2+) site. The C4-type zinc-finger motif lies at 33–55; it reads CPNCKKIMYTKELNENLNVCFNC.

It belongs to the AccD/PCCB family. As to quaternary structure, acetyl-CoA carboxylase is a heterohexamer composed of biotin carboxyl carrier protein (AccB), biotin carboxylase (AccC) and two subunits each of ACCase subunit alpha (AccA) and ACCase subunit beta (AccD). Zn(2+) is required as a cofactor.

It localises to the cytoplasm. It catalyses the reaction N(6)-carboxybiotinyl-L-lysyl-[protein] + acetyl-CoA = N(6)-biotinyl-L-lysyl-[protein] + malonyl-CoA. The protein operates within lipid metabolism; malonyl-CoA biosynthesis; malonyl-CoA from acetyl-CoA: step 1/1. In terms of biological role, component of the acetyl coenzyme A carboxylase (ACC) complex. Biotin carboxylase (BC) catalyzes the carboxylation of biotin on its carrier protein (BCCP) and then the CO(2) group is transferred by the transcarboxylase to acetyl-CoA to form malonyl-CoA. This Staphylococcus epidermidis (strain ATCC 35984 / DSM 28319 / BCRC 17069 / CCUG 31568 / BM 3577 / RP62A) protein is Acetyl-coenzyme A carboxylase carboxyl transferase subunit beta.